The following is a 900-amino-acid chain: Zinc finger protein 62 homolog (900 aa).

Residues 1–97 are disordered; sequence MSHLKTSTED…EASEKSLHLS (97 aa). Lys-5 participates in a covalent cross-link: Glycyl lysine isopeptide (Lys-Gly) (interchain with G-Cter in SUMO2). Residues 9–18 are compositionally biased toward acidic residues; the sequence is EDEEPTEEYE. The span at 47–73 shows a compositional bias: basic and acidic residues; sequence SKVENQQKKPVENRMKEDKSSIREAIS. Glycyl lysine isopeptide (Lys-Gly) (interchain with G-Cter in SUMO2) cross-links involve residues Lys-48, Lys-62, Lys-65, Lys-82, and Lys-92. Residues 83 to 94 are compositionally biased toward basic and acidic residues; it reads TEQEGEASEKSL. 13 consecutive C2H2-type zinc fingers follow at residues 225–247, 253–275, 281–303, 309–331, 337–359, 365–387, 393–415, 421–443, 449–471, 477–499, 505–527, 533–555, and 561–583; these read CKCD…KRIH, YECG…KRIH, YECD…KRIH, YECD…KSIH, YKCD…KVIH, YKCD…KSIH, HECK…RTIH, YVCD…RRLH, YKCD…KGIH, YKCS…KRIH, FGCD…KRIH, and YKCE…KSVH. Lys-587 participates in a covalent cross-link: Glycyl lysine isopeptide (Lys-Gly) (interchain with G-Cter in SUMO2). 10 C2H2-type zinc fingers span residues 589–611, 617–639, 645–667, 673–695, 701–723, 729–751, 757–779, 785–807, 813–834, and 840–862; these read FKCD…KKVH, YKCD…RRVH, YECD…KRIH, YECD…KSTH, HTCD…KRVH, FKCV…KRIH, YVCD…KRIH, YECD…KSVH, YNCE…KRIH, and YRCN…KRTH. Residue Lys-748 forms a Glycyl lysine isopeptide (Lys-Gly) (interchain with G-Cter in SUMO2) linkage. Lys-882 participates in a covalent cross-link: Glycyl lysine isopeptide (Lys-Gly) (interchain with G-Cter in SUMO2).

Belongs to the krueppel C2H2-type zinc-finger protein family.

The protein resides in the nucleus. In terms of biological role, may play a role in differentiating skeletal muscle. This is Zinc finger protein 62 homolog (ZFP62) from Homo sapiens (Human).